Here is a 307-residue protein sequence, read N- to C-terminus: Thymidylate synthase (307 aa).

Positions Met1 to His22 are disordered. The segment covering Glu7–Arg16 has biased composition (polar residues). Arg44 contributes to the dUMP binding site. A Phosphoserine modification is found at Ser108. DUMP-binding positions include Arg169–Arg170, Cys189–His190, Arg209–Asp212, Asn220, and His250–Tyr252. Catalysis depends on Cys189, which acts as the Nucleophile. Position 212 (Asp212) interacts with (6R)-5,10-methylene-5,6,7,8-tetrahydrofolate. Residues Lys286 and Lys302 each participate in a glycyl lysine isopeptide (Lys-Gly) (interchain with G-Cter in SUMO2) cross-link. Ala306 contributes to the (6R)-5,10-methylene-5,6,7,8-tetrahydrofolate binding site.

The protein belongs to the thymidylate synthase family. Homodimer.

The protein resides in the nucleus. It is found in the cytoplasm. The protein localises to the mitochondrion. It localises to the mitochondrion matrix. Its subcellular location is the mitochondrion inner membrane. The enzyme catalyses dUMP + (6R)-5,10-methylene-5,6,7,8-tetrahydrofolate = 7,8-dihydrofolate + dTMP. It participates in pyrimidine metabolism; dTTP biosynthesis. Its function is as follows. Catalyzes the reductive methylation of 2'-deoxyuridine 5'-monophosphate (dUMP) to thymidine 5'-monophosphate (dTMP), using the cosubstrate, 5,10- methylenetetrahydrofolate (CH2H4folate) as a 1-carbon donor and reductant and contributes to the de novo mitochondrial thymidylate biosynthesis pathway. In Rattus norvegicus (Rat), this protein is Thymidylate synthase (Tyms).